A 78-amino-acid chain; its full sequence is Defensin SD2 (78 aa).

A signal peptide spans 1–20 (MKSSMKMFAALLLVVMCLLA). 4 disulfides stabilise this stretch: cysteine 34–cysteine 78, cysteine 45–cysteine 65, cysteine 51–cysteine 72, and cysteine 55–cysteine 74.

The protein belongs to the DEFL family. Highest expression in flowers and to a lesser extent in leaves. Lower levels in hypocotyls. No expression in roots and cotyledons.

It localises to the secreted. Its subcellular location is the cell wall. Its function is as follows. May play a protective role in flowers by protecting the reproductive organs from potential pathogen attack. The chain is Defensin SD2 (SD2) from Helianthus annuus (Common sunflower).